Reading from the N-terminus, the 282-residue chain is Acyl-CoA-binding domain-containing protein 6 (282 aa).

The segment at 1-34 (MATPFLPAGATTGDSGGELSSGDDSGDLESFQTP) is disordered. Phosphoserine is present on Ser41. The ACB domain occupies 42 to 127 (LAELFEKAAA…VKKLDPGWNP (86 aa)). Residues 69–73 (YARYK) and Lys95 contribute to the an acyl-CoA site. At Ser106 the chain carries Phosphoserine. Tyr114 serves as a coordination point for an acyl-CoA. ANK repeat units follow at residues 191 to 220 (EGRA…GINC) and 224 to 253 (EGQT…DPTL).

Monomer.

It is found in the cytoplasm. The protein localises to the nucleus. In terms of biological role, binds long-chain acyl-coenzyme A molecules with a strong preference for unsaturated C18:1-CoA, lower affinity for unsaturated C20:4-CoA, and very weak affinity for saturated C16:0-CoA. Does not bind fatty acids. Plays a role in protein N-myristoylation. This Rattus norvegicus (Rat) protein is Acyl-CoA-binding domain-containing protein 6 (Acbd6).